A 281-amino-acid chain; its full sequence is Ras-related protein Rab-40C (281 aa).

The GTP site is built by serine 23, glycine 26, lysine 27, and serine 46. Positions serine 41–isoleucine 49 are switch-I. Mg(2+)-binding residues include serine 46 and aspartate 69. The GTP site is built by glycine 72, asparagine 126, and arginine 127. The switch-II stretch occupies residues glycine 72–glutamine 88. Residues leucine 175–alanine 228 enclose the SOCS box domain. Residues serine 245–serine 281 are disordered. Positions proline 270–serine 281 are enriched in polar residues. Cysteine 273 carries S-palmitoyl cysteine lipidation. Cysteine 278 is lipidated: S-geranylgeranyl cysteine.

This sequence belongs to the small GTPase superfamily. Rab family. As to quaternary structure, component of the cullin-5-RING E3 ubiquitin-protein ligase complex (ECS(RAB40C) complex) composed of CUL5, Elongin BC (ELOB and ELOC), RNF7/RBX2 and RAB40C. Interacts with protein phosphatase 6 (PP6) complex components ANKRD28, ANKRD52, PPP6C, PP6R1 and PP6R2; the interaction leads to ANKRD28 ubiquitination and decreased PP6 activity. Interacts with DAB2IP; DAB2IP acts as a GAP for RAB40C. Mg(2+) is required as a cofactor.

It localises to the cell membrane. The protein resides in the cytoplasm. Its subcellular location is the cytosol. It is found in the golgi apparatus membrane. It catalyses the reaction GTP + H2O = GDP + phosphate + H(+). Its pathway is protein modification; protein ubiquitination. With respect to regulation, regulated by guanine nucleotide exchange factors (GEFs) which promote the exchange of bound GDP for free GTP. Regulated by GTPase activating proteins (GAPs) including DAB2IP, which increase the GTP hydrolysis activity. Inhibited by GDP dissociation inhibitors (GDIs). RAB40C small GTPase acts as substrate-recognition component of the ECS(RAB40C) E3 ubiquitin ligase complex which mediates the ubiquitination and subsequent proteasomal degradation of target proteins. The Rab40 subfamily belongs to the Rab family that are key regulators of intracellular membrane trafficking, from the formation of transport vesicles to their fusion with membranes. Rabs cycle between an inactive GDP-bound form and an active GTP-bound form that is able to recruit to membranes different sets of downstream effectors directly responsible for vesicle formation, movement, tethering and fusion. As part of the ECS(RAB40C) complex, mediates ANKRD28 ubiquitination and degradation, thereby inhibiting protein phosphatase 6 (PP6) complex activity and focal adhesion assembly during cell migration. Also negatively regulate lipid droplets accumulation in a GTP-dependent manner. In Mus musculus (Mouse), this protein is Ras-related protein Rab-40C.